The primary structure comprises 229 residues: Cytidylate kinase (229 aa).

12 to 20 (GPSGVGKST) serves as a coordination point for ATP.

The protein belongs to the cytidylate kinase family. Type 1 subfamily.

Its subcellular location is the cytoplasm. It catalyses the reaction CMP + ATP = CDP + ADP. The catalysed reaction is dCMP + ATP = dCDP + ADP. This is Cytidylate kinase from Mesomycoplasma hyopneumoniae (strain 232) (Mycoplasma hyopneumoniae).